A 239-amino-acid chain; its full sequence is Ribosomal RNA small subunit methyltransferase G (239 aa).

S-adenosyl-L-methionine is bound by residues Gly-79, Phe-84, 130–131 (AE), and Arg-149.

This sequence belongs to the methyltransferase superfamily. RNA methyltransferase RsmG family.

The protein resides in the cytoplasm. Functionally, specifically methylates the N7 position of a guanine in 16S rRNA. This is Ribosomal RNA small subunit methyltransferase G from Lactobacillus delbrueckii subsp. bulgaricus (strain ATCC BAA-365 / Lb-18).